A 496-amino-acid chain; its full sequence is PE-PGRS family protein PE_PGRS1 (496 aa).

One can recognise a PE domain in the interval 4–94 (LITSPATVAA…VCYAAAETAN (91 aa)). A disordered region spans residues 461 to 480 (LIGNGGDGGPGMFGGPGGAG).

Belongs to the mycobacterial PE family. PGRS subfamily.

The protein resides in the secreted. It localises to the cell wall. The protein localises to the host mitochondrion. Its function is as follows. When expressed in host mitochondria, induces mitochondrial stress which results in mitochondrial membrane depolarization, up-regulation of mitochondrial superoxides and release of cytochrome-C in the cytoplasm. The cytochrome-C in cytoplasm triggers the activation of caspase-9, caspase-3 and caspase-7, leading to the apoptosis of host macrophages. Being a late expressing protein, apoptosis induction by PE_PGRS1 may facilitate the M.tuberculosis survival and silent expansion of its niche at the site of granuloma. In terms of biological role, when expressed in THP-1 macrophages, promotes the survival of mycobacteria within macrophages after a 24- to 48-hour infection by blocking endoplasmic reticulum stress and inhibiting host cell apoptosis. Can chelate excessive intracellular calcium in THP-1 macrophages, which reduces the concentration of intracellular free Ca(2+) and blocks the PERK-eIF2alpha-ATF4 axis, thereby inhibiting the endoplasmic reticulum stress caused by infection. It also reduces the apoptosis of THP-1 macrophages by decreasing the activation of caspase-3 and caspase-9. The chain is PE-PGRS family protein PE_PGRS1 from Mycobacterium tuberculosis (strain ATCC 25618 / H37Rv).